The following is an 86-amino-acid chain: Defensin-like SRCA-homolog protein (86 aa).

The first 26 residues, 1-26 (MRCVVLFMVSCLLIVLLINHFEEVEA), serve as a signal peptide directing secretion. 4 cysteine pairs are disulfide-bonded: Cys-32–Cys-84, Cys-42–Cys-70, Cys-52–Cys-79, and Cys-68–Cys-81.

Belongs to the DEFL family.

The protein localises to the secreted. In terms of biological role, involved in male-mediated self-incompatibility. The sequence is that of Defensin-like SRCA-homolog protein (SCR37) from Arabidopsis lyrata (Lyre-leaved rock-cress).